A 243-amino-acid chain; its full sequence is LTAKLGYPITDDLDIYTRLGGMVWRADTKAHNNVTGESEKNHDTGVSPVFAGGVEWAITPEIATRLEYQWTNNIGDANTIGTRPDNGLLSLGVSYRFGQGEAAPVVAPAPAPAPEVQTKHFTLKSDVLFNFNKATLKPEGQAALDQLYSQLSNLDPKDGSVVVLGYTDRIGSDAYNQGLSERRAQSVVDYLISKGIPADKISARGMGESNPVTGNTCDNVKQRAALIDCLAPDRRVEIEVKGI.

A run of 5 beta stranded transmembrane segments spans residues leucine 1–proline 8, leucine 13–glycine 21, proline 48–alanine 57, isoleucine 62–glutamine 69, and leucine 88–arginine 96. 4 repeat units span residues alanine 107 to proline 108, alanine 109 to proline 110, alanine 111 to proline 112, and alanine 113 to proline 114. Residues alanine 107–proline 114 are 4 X 2 AA tandem repeats of A-P. Positions valine 116–isoleucine 243 constitute an OmpA-like domain. A disulfide bridge links cysteine 217 with cysteine 229.

The protein belongs to the outer membrane OOP (TC 1.B.6) superfamily. OmpA family. Monomer and homodimer.

It is found in the cell outer membrane. Its function is as follows. With TolR probably plays a role in maintaining the position of the peptidoglycan cell wall in the periplasm. Acts as a porin with low permeability that allows slow penetration of small solutes; an internal gate slows down solute passage. In terms of biological role, required for conjugation with F-type plasmids; probably serves as the mating receptor on recipient cells. The protein is Outer membrane protein A of Escherichia fergusonii.